The primary structure comprises 295 residues: Ankyrin repeat and SOCS box protein 17 (295 aa).

One copy of the ANK repeat lies at 146–176 (SGITPLLYVAQTRQSNILKILLQYGILEREN). The SOCS box domain occupies 232–295 (LGRRPIISNW…CLQNYLNLES (64 aa)).

The protein belongs to the ankyrin SOCS box (ASB) family.

The protein operates within protein modification; protein ubiquitination. In terms of biological role, may be a substrate-recognition component of a SCF-like ECS (Elongin-Cullin-SOCS-box protein) E3 ubiquitin-protein ligase complex which mediates the ubiquitination and subsequent proteasomal degradation of target proteins. This chain is Ankyrin repeat and SOCS box protein 17 (ASB17), found in Bos taurus (Bovine).